The primary structure comprises 275 residues: Phosphonates import ATP-binding protein PhnC (275 aa).

The ABC transporter domain occupies 2 to 246 (LKIENLTKRY…ALTEIYGEEE (245 aa)). 35–42 (GPSGAGKS) is an ATP binding site.

It belongs to the ABC transporter superfamily. Phosphonates importer (TC 3.A.1.9.1) family. As to quaternary structure, the complex is composed of two ATP-binding proteins (PhnC), two transmembrane proteins (PhnE) and a solute-binding protein (PhnD).

Its subcellular location is the cell inner membrane. It carries out the reaction phosphonate(out) + ATP + H2O = phosphonate(in) + ADP + phosphate + H(+). Functionally, part of the ABC transporter complex PhnCDE involved in phosphonates import. Responsible for energy coupling to the transport system. This Wolinella succinogenes (strain ATCC 29543 / DSM 1740 / CCUG 13145 / JCM 31913 / LMG 7466 / NCTC 11488 / FDC 602W) (Vibrio succinogenes) protein is Phosphonates import ATP-binding protein PhnC.